The following is an 802-amino-acid chain: Leucine--tRNA ligase (802 aa).

A 'HIGH' region motif is present at residues 40 to 51 (PYPSGAGLHVGH). The 'KMSKS' region signature appears at 576 to 580 (KMSKS). Residue Lys-579 coordinates ATP.

It belongs to the class-I aminoacyl-tRNA synthetase family.

It localises to the cytoplasm. It carries out the reaction tRNA(Leu) + L-leucine + ATP = L-leucyl-tRNA(Leu) + AMP + diphosphate. In Bacillus thuringiensis subsp. konkukian (strain 97-27), this protein is Leucine--tRNA ligase.